The chain runs to 86 residues: Protein Tat (86 aa).

An interaction with human CREBBP region spans residues 1–24 (MDPVDPNQEPWNHPGSQPRTACNN). Residues 1–48 (MDPVDPNQEPWNHPGSQPRTACNNCYCKKCCYHCQLCFLKKGLGIYYG) are transactivation. Cysteine 22, cysteine 25, and cysteine 27 together coordinate Zn(2+). The cysteine-rich stretch occupies residues 22-37 (CNNCYCKKCCYHCQLC). At lysine 28 the chain carries N6-acetyllysine; by host PCAF. The Zn(2+) site is built by cysteine 30, histidine 33, cysteine 34, and cysteine 37. The interval 38-48 (FLKKGLGIYYG) is core. Over residues 48 to 58 (GRKKRRQRRGT) the composition is skewed to basic residues. Residues 48 to 86 (GRKKRRQRRGTPKSLQDHQTLIPKQPLSRTSGDPTGPEK) form a disordered region. The Nuclear localization signal, RNA-binding (TAR), and protein transduction motif lies at 49–57 (RKKRRQRRG). Positions 49 to 86 (RKKRRQRRGTPKSLQDHQTLIPKQPLSRTSGDPTGPEK) are interaction with the host capping enzyme RNGTT. 2 positions are modified to N6-acetyllysine; by host EP300 and GCN5L2: lysine 50 and lysine 51. Arginine 52 and arginine 53 each carry asymmetric dimethylarginine; by host PRMT6. Lysine 71 participates in a covalent cross-link: Glycyl lysine isopeptide (Lys-Gly) (interchain with G-Cter in ubiquitin).

It belongs to the lentiviruses Tat family. As to quaternary structure, interacts with host CCNT1. Associates with the P-TEFb complex composed at least of Tat, P-TEFb (CDK9 and CCNT1), TAR RNA, RNA Pol II. Recruits the HATs CREBBP, TAF1/TFIID, EP300, PCAF and GCN5L2. Interacts with host KAT5/Tip60; this interaction targets the latter to degradation. Interacts with the host deacetylase SIRT1. Interacts with host capping enzyme RNGTT; this interaction stimulates RNGTT. Binds to host KDR, and to the host integrins ITGAV/ITGB3 and ITGA5/ITGB1. Interacts with host KPNB1/importin beta-1 without previous binding to KPNA1/importin alpha-1. Interacts with EIF2AK2. Interacts with host nucleosome assembly protein NAP1L1; this interaction may be required for the transport of Tat within the nucleus, since the two proteins interact at the nuclear rim. Interacts with host C1QBP/SF2P32; this interaction involves lysine-acetylated Tat. Interacts with the host chemokine receptors CCR2, CCR3 and CXCR4. Interacts with host DPP4/CD26; this interaction may trigger an anti-proliferative effect. Interacts with host LDLR. Interacts with the host extracellular matrix metalloproteinase MMP1. Interacts with host PRMT6; this interaction mediates Tat's methylation. Interacts with, and is ubiquitinated by MDM2/Hdm2. Interacts with host PSMC3 and HTATIP2. Interacts with STAB1; this interaction may overcome SATB1-mediated repression of IL2 and IL2RA (interleukin) in T cells by binding to the same domain than HDAC1. Interacts (when acetylated) with human CDK13, thereby increasing HIV-1 mRNA splicing and promoting the production of the doubly spliced HIV-1 protein Nef. Interacts with host TBP; this interaction modulates the activity of transcriptional pre-initiation complex. Interacts with host RELA. Interacts with host PLSCR1; this interaction negatively regulates Tat transactivation activity by altering its subcellular distribution. In terms of processing, asymmetrical arginine methylation by host PRMT6 seems to diminish the transactivation capacity of Tat and affects the interaction with host CCNT1. Post-translationally, acetylation by EP300, CREBBP, GCN5L2/GCN5 and PCAF regulates the transactivation activity of Tat. EP300-mediated acetylation of Lys-50 promotes dissociation of Tat from the TAR RNA through the competitive binding to PCAF's bromodomain. In addition, the non-acetylated Tat's N-terminus can also interact with PCAF. PCAF-mediated acetylation of Lys-28 enhances Tat's binding to CCNT1. Lys-50 is deacetylated by SIRT1. Polyubiquitination by host MDM2 does not target Tat to degradation, but activates its transactivation function and fosters interaction with CCNT1 and TAR RNA. In terms of processing, phosphorylated by EIF2AK2 on serine and threonine residues adjacent to the basic region important for TAR RNA binding and function. Phosphorylation of Tat by EIF2AK2 is dependent on the prior activation of EIF2AK2 by dsRNA.

It is found in the host nucleus. It localises to the host nucleolus. The protein resides in the host cytoplasm. Its subcellular location is the secreted. Transcriptional activator that increases RNA Pol II processivity, thereby increasing the level of full-length viral transcripts. Recognizes a hairpin structure at the 5'-LTR of the nascent viral mRNAs referred to as the transactivation responsive RNA element (TAR) and recruits the cyclin T1-CDK9 complex (P-TEFb complex) that will in turn hyperphosphorylate the RNA polymerase II to allow efficient elongation. The CDK9 component of P-TEFb and other Tat-activated kinases hyperphosphorylate the C-terminus of RNA Pol II that becomes stabilized and much more processive. Other factors such as HTATSF1/Tat-SF1, SUPT5H/SPT5, and HTATIP2 are also important for Tat's function. Besides its effect on RNA Pol II processivity, Tat induces chromatin remodeling of proviral genes by recruiting the histone acetyltransferases (HATs) CREBBP, EP300 and PCAF to the chromatin. This also contributes to the increase in proviral transcription rate, especially when the provirus integrates in transcriptionally silent region of the host genome. To ensure maximal activation of the LTR, Tat mediates nuclear translocation of NF-kappa-B by interacting with host RELA. Through its interaction with host TBP, Tat may also modulate transcription initiation. Tat can reactivate a latently infected cell by penetrating in it and transactivating its LTR promoter. In the cytoplasm, Tat is thought to act as a translational activator of HIV-1 mRNAs. Functionally, extracellular circulating Tat can be endocytosed by surrounding uninfected cells via the binding to several surface receptors such as CD26, CXCR4, heparan sulfate proteoglycans (HSPG) or LDLR. Neurons are rarely infected, but they internalize Tat via their LDLR. Through its interaction with nuclear HATs, Tat is potentially able to control the acetylation-dependent cellular gene expression. Modulates the expression of many cellular genes involved in cell survival, proliferation or in coding for cytokines or cytokine receptors. Tat plays a role in T-cell and neurons apoptosis. Tat induced neurotoxicity and apoptosis probably contribute to neuroAIDS. Circulating Tat also acts as a chemokine-like and/or growth factor-like molecule that binds to specific receptors on the surface of the cells, affecting many cellular pathways. In the vascular system, Tat binds to ITGAV/ITGB3 and ITGA5/ITGB1 integrins dimers at the surface of endothelial cells and competes with bFGF for heparin-binding sites, leading to an excess of soluble bFGF. The polypeptide is Protein Tat (Human immunodeficiency virus type 1 group M subtype H (isolate VI991) (HIV-1)).